The following is a 144-amino-acid chain: Large ribosomal subunit protein uL15 (144 aa).

Residues 1 to 58 (MNLSNLRAPRKANEKKKRVGRGMGSGMGKTSARGHKGQRSRSGSRMMRGFEGGQMPLH) form a disordered region. Positions 8-20 (APRKANEKKKRVG) are enriched in basic residues. The span at 40–49 (SRSGSRMMRG) shows a compositional bias: low complexity.

It belongs to the universal ribosomal protein uL15 family. In terms of assembly, part of the 50S ribosomal subunit.

In terms of biological role, binds to the 23S rRNA. The polypeptide is Large ribosomal subunit protein uL15 (Koribacter versatilis (strain Ellin345)).